We begin with the raw amino-acid sequence, 197 residues long: MFITFEGIDGSGKSTQIQLLAQYLEKRGKKVILKREPGGTETGEKIRKILLEEEVTPKAELFLFLASRNLLVTEIKQYLSEGYAVLLDRYTDSSVAYQGFGRNLGKEIVEELNDFATDGLIPDLTFYIDVDVETALKRKGELNRFEKREFLERVREGYLVLAREHPERIVVLDGKRSIEEIHRDVVREVKRRWKLDV.

ATP is bound at residue glycine 7–serine 14.

Belongs to the thymidylate kinase family.

The catalysed reaction is dTMP + ATP = dTDP + ADP. Its function is as follows. Phosphorylation of dTMP to form dTDP in both de novo and salvage pathways of dTTP synthesis. The chain is Thymidylate kinase (tmk) from Thermotoga maritima (strain ATCC 43589 / DSM 3109 / JCM 10099 / NBRC 100826 / MSB8).